A 151-amino-acid chain; its full sequence is MAKRVKVALTESIASLGKEGDLVEVAPGYARNFLLPYGKAMNVTPAVLKQIERKKEKEKIAADKLKQEALDFQTALSTIGRFTIKKQVGEDGVLFGTVTNGDVAEAIEAATKKEIDRRNITVPDIHNLGSFTAKIKLHPDVNAEVNIEVTS.

This sequence belongs to the bacterial ribosomal protein bL9 family.

Its function is as follows. Binds to the 23S rRNA. In Prochlorococcus marinus (strain MIT 9312), this protein is Large ribosomal subunit protein bL9.